The primary structure comprises 357 residues: Adenylate isopentenyltransferase 1, chloroplastic (357 aa).

The transit peptide at 1–71 (MTELNFHLLP…NRKDKVVVIL (71 aa)) directs the protein to the chloroplast. Positions 20-39 (TTTSPSFSSHSSSSSSLLSF) are enriched in low complexity. The interval 20 to 58 (TTTSPSFSSHSSSSSSLLSFTKRRRKHQPLVSSIRMEQS) is disordered. Residue 72 to 79 (GATGAGKS) participates in ATP binding.

It belongs to the IPP transferase family. In terms of tissue distribution, expressed in the vascular stele of the roots, in the xylem precursor cell files in the root tip, in leaf axils, ovules, and immature seeds.

The protein localises to the plastid. It is found in the chloroplast. It carries out the reaction dimethylallyl diphosphate + AMP = N(6)-(dimethylallyl)adenosine 5'-phosphate + diphosphate. It catalyses the reaction dimethylallyl diphosphate + ADP = N(6)-(dimethylallyl)adenosine 5'-diphosphate + diphosphate. The enzyme catalyses dimethylallyl diphosphate + ATP = N(6)-(dimethylallyl)adenosine 5'-triphosphate + diphosphate. In terms of biological role, involved in cytokinin biosynthesis. Catalyzes the transfer of an isopentenyl group from dimethylallyl diphosphate (DMAPP) to ATP, ADP and AMP. Adenine, adenosine, isopentenylpyrophosphate and 1-hydroxy-2-methyl-2-(E)-butenyl 4-diphosphate (HMBDP) are not used as substrates. This is Adenylate isopentenyltransferase 1, chloroplastic (IPT1) from Arabidopsis thaliana (Mouse-ear cress).